The following is a 206-amino-acid chain: Ectodysplasin-A receptor-associated adapter protein (206 aa).

Disordered stretches follow at residues 1-36 (MRPL…DKYP) and 52-77 (TLNC…TGDP). 2 stretches are compositionally biased toward polar residues: residues 24–33 (PSTLSFNTSD) and 52–62 (TLNCPPNSDMK). One can recognise a Death domain in the interval 114 to 190 (DVIRIKLDPC…DVEKVLRRWV (77 aa)).

As to quaternary structure, self-associates and binds to EDAR, TRAF1, TRAF2 and TRAF3.

It localises to the cytoplasm. Functionally, adapter protein that interacts with EDAR DEATH domain and couples the receptor to EDA signaling pathway during morphogenesis of ectodermal organs. Mediates the activation of NF-kappa-B. The polypeptide is Ectodysplasin-A receptor-associated adapter protein (EDARADD) (Macaca fascicularis (Crab-eating macaque)).